The primary structure comprises 448 residues: Tubulin beta chain (448 aa).

Positions 11, 69, 138, 142, 143, 144, 204, and 226 each coordinate GTP. E69 lines the Mg(2+) pocket. The disordered stretch occupies residues Q426–E448. The segment covering G429–E448 has biased composition (acidic residues).

This sequence belongs to the tubulin family. As to quaternary structure, dimer of alpha and beta chains. A typical microtubule is a hollow water-filled tube with an outer diameter of 25 nm and an inner diameter of 15 nM. Alpha-beta heterodimers associate head-to-tail to form protofilaments running lengthwise along the microtubule wall with the beta-tubulin subunit facing the microtubule plus end conferring a structural polarity. Microtubules usually have 13 protofilaments but different protofilament numbers can be found in some organisms and specialized cells. The cofactor is Mg(2+).

Its subcellular location is the cytoplasm. It is found in the cytoskeleton. Functionally, tubulin is the major constituent of microtubules, a cylinder consisting of laterally associated linear protofilaments composed of alpha- and beta-tubulin heterodimers. Microtubules grow by the addition of GTP-tubulin dimers to the microtubule end, where a stabilizing cap forms. Below the cap, tubulin dimers are in GDP-bound state, owing to GTPase activity of alpha-tubulin. The chain is Tubulin beta chain (TUB2) from Epichloe coenophiala (Tall fescue endophyte fungus).